We begin with the raw amino-acid sequence, 156 residues long: Small ribosomal subunit protein uS7 (156 aa).

This sequence belongs to the universal ribosomal protein uS7 family. Part of the 30S ribosomal subunit. Contacts proteins S9 and S11.

Functionally, one of the primary rRNA binding proteins, it binds directly to 16S rRNA where it nucleates assembly of the head domain of the 30S subunit. Is located at the subunit interface close to the decoding center, probably blocks exit of the E-site tRNA. The polypeptide is Small ribosomal subunit protein uS7 (Cutibacterium acnes (strain DSM 16379 / KPA171202) (Propionibacterium acnes)).